The following is a 276-amino-acid chain: Ribonuclease 3 (276 aa).

The disordered stretch occupies residues M1–S29. A compositionally biased stretch (basic and acidic residues) spans K9–D25. The RNase III domain occupies H31–G157. Position 70 (E70) interacts with Mg(2+). D74 is a catalytic residue. Mg(2+) is bound by residues D143 and E146. The active site involves E146. Residues D184–A252 form the DRBM domain. Residues Y227–A276 are disordered. The span at V265–A276 shows a compositional bias: acidic residues.

Belongs to the ribonuclease III family. As to quaternary structure, homodimer. Requires Mg(2+) as cofactor.

It is found in the cytoplasm. It carries out the reaction Endonucleolytic cleavage to 5'-phosphomonoester.. Digests double-stranded RNA. Involved in the processing of primary rRNA transcript to yield the immediate precursors to the large and small rRNAs (23S and 16S). Also processes some mRNAs, and tRNAs when they are encoded in the rRNA operon. May modulate key aspects of gene expression as its absence has extensive effects on the abundance of about 200 different transcripts. Probably processes pre-crRNA and tracrRNA of type II CRISPR loci if present in the organism. The protein is Ribonuclease 3 (rnc) of Streptomyces coelicolor (strain ATCC BAA-471 / A3(2) / M145).